The following is a 327-amino-acid chain: Lipoyl synthase (327 aa).

7 residues coordinate [4Fe-4S] cluster: Cys66, Cys71, Cys77, Cys92, Cys96, Cys99, and Ser306. Positions 78-295 (FSKGTATFMI…EKEAYELGFS (218 aa)) constitute a Radical SAM core domain.

The protein belongs to the radical SAM superfamily. Lipoyl synthase family. The cofactor is [4Fe-4S] cluster.

The protein resides in the cytoplasm. The enzyme catalyses [[Fe-S] cluster scaffold protein carrying a second [4Fe-4S](2+) cluster] + N(6)-octanoyl-L-lysyl-[protein] + 2 oxidized [2Fe-2S]-[ferredoxin] + 2 S-adenosyl-L-methionine + 4 H(+) = [[Fe-S] cluster scaffold protein] + N(6)-[(R)-dihydrolipoyl]-L-lysyl-[protein] + 4 Fe(3+) + 2 hydrogen sulfide + 2 5'-deoxyadenosine + 2 L-methionine + 2 reduced [2Fe-2S]-[ferredoxin]. Its pathway is protein modification; protein lipoylation via endogenous pathway; protein N(6)-(lipoyl)lysine from octanoyl-[acyl-carrier-protein]: step 2/2. Functionally, catalyzes the radical-mediated insertion of two sulfur atoms into the C-6 and C-8 positions of the octanoyl moiety bound to the lipoyl domains of lipoate-dependent enzymes, thereby converting the octanoylated domains into lipoylated derivatives. This is Lipoyl synthase from Neisseria meningitidis serogroup B (strain ATCC BAA-335 / MC58).